The chain runs to 274 residues: Protein RecA (274 aa).

43 to 50 (GPESSGKT) provides a ligand contact to ATP.

It belongs to the RecA family.

Its subcellular location is the cytoplasm. Its function is as follows. Can catalyze the hydrolysis of ATP in the presence of single-stranded DNA, the ATP-dependent uptake of single-stranded DNA by duplex DNA, and the ATP-dependent hybridization of homologous single-stranded DNAs. It interacts with LexA causing its activation and leading to its autocatalytic cleavage. In Neisseria pharyngis, this protein is Protein RecA.